The primary structure comprises 72 residues: Cytochrome b-c1 complex subunit 8-1, mitochondrial (72 aa).

Residues 1 to 41 are Mitochondrial matrix-facing; that stretch reads MGKQPVKLKAVVYALSPFQQKIMTGLWKDLPEKIHHKVSEN. A helical transmembrane segment spans residues 42–58; the sequence is WISATLLVTPVVGTYWY. Topologically, residues 59 to 72 are mitochondrial intermembrane; that stretch reads AQYFKEQEKLEHRF.

The protein belongs to the UQCRQ/QCR8 family. In terms of assembly, component of the ubiquinol-cytochrome c oxidoreductase (cytochrome b-c1 complex, complex III, CIII), a multisubunit enzyme composed of 10 subunits. The complex is composed of 3 respiratory subunits cytochrome b (MT-CYB), cytochrome c1 (CYC1-1 or CYC1-2) and Rieske protein (UCR1-1 or UCR1-2), 2 core protein subunits MPPalpha1 (or MPPalpha2) and MPPB, and 5 low-molecular weight protein subunits QCR7-1 (or QCR7-2), UCRQ-1 (or UCRQ-2), QCR9, UCRY and probably QCR6-1 (or QCR6-2). The complex exists as an obligatory dimer and forms supercomplexes (SCs) in the inner mitochondrial membrane with NADH-ubiquinone oxidoreductase (complex I, CI), resulting in different assemblies (supercomplexes SCI(1)III(2) and SCI(2)III(4)).

Its subcellular location is the mitochondrion inner membrane. Component of the ubiquinol-cytochrome c oxidoreductase, a multisubunit transmembrane complex that is part of the mitochondrial electron transport chain which drives oxidative phosphorylation. The respiratory chain contains 3 multisubunit complexes succinate dehydrogenase (complex II, CII), ubiquinol-cytochrome c oxidoreductase (cytochrome b-c1 complex, complex III, CIII) and cytochrome c oxidase (complex IV, CIV), that cooperate to transfer electrons derived from NADH and succinate to molecular oxygen, creating an electrochemical gradient over the inner membrane that drives transmembrane transport and the ATP synthase. The cytochrome b-c1 complex catalyzes electron transfer from ubiquinol to cytochrome c, linking this redox reaction to translocation of protons across the mitochondrial inner membrane, with protons being carried across the membrane as hydrogens on the quinol. In the process called Q cycle, 2 protons are consumed from the matrix, 4 protons are released into the intermembrane space and 2 electrons are passed to cytochrome c. The protein is Cytochrome b-c1 complex subunit 8-1, mitochondrial (UCRQ-1) of Arabidopsis thaliana (Mouse-ear cress).